The chain runs to 556 residues: Formate--tetrahydrofolate ligase (556 aa).

Position 65–72 (65–72 (TPAGEGKS)) interacts with ATP.

This sequence belongs to the formate--tetrahydrofolate ligase family.

It carries out the reaction (6S)-5,6,7,8-tetrahydrofolate + formate + ATP = (6R)-10-formyltetrahydrofolate + ADP + phosphate. It participates in one-carbon metabolism; tetrahydrofolate interconversion. This Streptococcus pneumoniae (strain Taiwan19F-14) protein is Formate--tetrahydrofolate ligase.